The primary structure comprises 310 residues: tRNA-cytidine(32) 2-sulfurtransferase (310 aa).

The PP-loop motif motif lies at 47-52 (SGGKDS). C122, C125, and C213 together coordinate [4Fe-4S] cluster.

The protein belongs to the TtcA family. In terms of assembly, homodimer. It depends on Mg(2+) as a cofactor. The cofactor is [4Fe-4S] cluster.

The protein localises to the cytoplasm. It catalyses the reaction cytidine(32) in tRNA + S-sulfanyl-L-cysteinyl-[cysteine desulfurase] + AH2 + ATP = 2-thiocytidine(32) in tRNA + L-cysteinyl-[cysteine desulfurase] + A + AMP + diphosphate + H(+). The protein operates within tRNA modification. In terms of biological role, catalyzes the ATP-dependent 2-thiolation of cytidine in position 32 of tRNA, to form 2-thiocytidine (s(2)C32). The sulfur atoms are provided by the cysteine/cysteine desulfurase (IscS) system. This Serratia proteamaculans (strain 568) protein is tRNA-cytidine(32) 2-sulfurtransferase.